The primary structure comprises 745 residues: 5-methyltetrahydropteroyltriglutamate--homocysteine methyltransferase (745 aa).

The 5-methyltetrahydropteroyltri-L-glutamate site is built by K19 and N115. Residues 420–422 (IGS) and E473 each bind L-homocysteine. L-methionine is bound by residues 420-422 (IGS) and E473. 5-methyltetrahydropteroyltri-L-glutamate-binding positions include D478, Y501, 504 to 505 (RA), and W550. Position 588 (D588) interacts with L-homocysteine. D588 is an L-methionine binding site. Residues H630, C632, and E654 each coordinate Zn(2+). The Proton donor role is filled by H683. C715 lines the Zn(2+) pocket.

Belongs to the vitamin-B12 independent methionine synthase family. The cofactor is Zn(2+).

It catalyses the reaction 5-methyltetrahydropteroyltri-L-glutamate + L-homocysteine = tetrahydropteroyltri-L-glutamate + L-methionine. Its pathway is amino-acid biosynthesis; L-methionine biosynthesis via de novo pathway; L-methionine from L-homocysteine (MetE route): step 1/1. Its function is as follows. Catalyzes the transfer of a methyl group from 5-methyltetrahydrofolate to homocysteine resulting in methionine formation. In Streptococcus mutans serotype c (strain ATCC 700610 / UA159), this protein is 5-methyltetrahydropteroyltriglutamate--homocysteine methyltransferase.